The following is a 581-amino-acid chain: Netrin-3 (581 aa).

The signal sequence occupies residues 1–15 (LRLLLTTSVLRLARA). One can recognise a Laminin N-terminal domain in the interval 35–261 (APRRCIPEFV…SVGELQVGGR (227 aa)). N-linked (GlcNAc...) asparagine glycosylation is found at asparagine 88 and asparagine 103. 15 disulfide bridges follow: cysteine 91/cysteine 124, cysteine 262/cysteine 271, cysteine 264/cysteine 281, cysteine 283/cysteine 292, cysteine 295/cysteine 315, cysteine 318/cysteine 327, cysteine 320/cysteine 345, cysteine 348/cysteine 357, cysteine 360/cysteine 378, cysteine 381/cysteine 393, cysteine 383/cysteine 400, cysteine 402/cysteine 411, cysteine 414/cysteine 428, cysteine 449/cysteine 521, and cysteine 468/cysteine 578. Laminin EGF-like domains follow at residues 262–317 (CKCN…ECLA), 318–380 (CNCN…ACKA), and 381–430 (CDCH…PCIK). N-linked (GlcNAc...) asparagine glycosylation is present at asparagine 394. The 130-residue stretch at 449-578 (CDSYCKPAKG…LQRREKKGKC (130 aa)) folds into the NTR domain. The short motif at 507-509 (RGD) is the Cell attachment site element. N-linked (GlcNAc...) asparagine glycosylation occurs at asparagine 540.

The protein resides in the secreted. It is found in the extracellular space. It localises to the extracellular matrix. Its function is as follows. Netrins control guidance of CNS commissural axons and peripheral motor axons. The polypeptide is Netrin-3 (NTN3) (Gallus gallus (Chicken)).